The sequence spans 702 residues: Dynein intermediate chain 2, ciliary (702 aa).

Residues 1-11 (MPVKSTKTKGG) show a composition bias toward low complexity. Disordered regions lie at residues 1-64 (MPVK…IKPD), 128-226 (DEAR…FSST), and 243-272 (QEKA…ETQS). Composition is skewed to basic and acidic residues over residues 36–52 (GKKD…HGGE) and 152–176 (GEEK…RDEE). Over residues 189–206 (KLTNQFNFSERASQTYNN) the composition is skewed to polar residues. Residues 243–261 (QEKAKEKKAAPSKKDDDKS) show a composition bias toward basic and acidic residues. WD repeat units follow at residues 380–420 (PTDS…ANPV), 429–472 (KHTD…LTYT), 490–533 (TQLT…QFLD), 537–577 (AHHM…GPMF), 580–620 (DLGS…YEPI), and 628–667 (KKKT…RKVP).

The protein belongs to the dynein intermediate chain family. Consists of at least two heavy chains (alpha and beta), three intermediate chains and several light chains.

The protein localises to the cytoplasm. It localises to the cytoskeleton. It is found in the cilium axoneme. Microtubule-binding protein that may be involved in dynein outer arm assembly on the axoneme. The chain is Dynein intermediate chain 2, ciliary from Heliocidaris crassispina (Sea urchin).